We begin with the raw amino-acid sequence, 470 residues long: Cysteine--tRNA ligase 1 (470 aa).

Cys29 contacts Zn(2+). The 'HIGH' region signature appears at 31–41 (PTVYDDAHIGN). The Zn(2+) site is built by Cys221, His246, and Glu250. The short motif at 279–283 (KMSKS) is the 'KMSKS' region element. Lys282 is an ATP binding site.

Belongs to the class-I aminoacyl-tRNA synthetase family. Monomer. Zn(2+) serves as cofactor.

It is found in the cytoplasm. The catalysed reaction is tRNA(Cys) + L-cysteine + ATP = L-cysteinyl-tRNA(Cys) + AMP + diphosphate. The sequence is that of Cysteine--tRNA ligase 1 from Burkholderia lata (strain ATCC 17760 / DSM 23089 / LMG 22485 / NCIMB 9086 / R18194 / 383).